We begin with the raw amino-acid sequence, 407 residues long: DAZ-associated protein 1 (407 aa).

Position 1 is an N-acetylmethionine (methionine 1). RRM domains are found at residues 10 to 97 and 113 to 190; these read GKLF…RTRP and NKIF…RAEP. Residues 74-117 are disordered; that stretch reads TLDGRNIDPKPCTPRGMQPERTRPKEGWQKGPRSDNSKSNKIFV. Over residues 91–111 the composition is skewed to basic and acidic residues; the sequence is QPERTRPKEGWQKGPRSDNSK. An N6-acetyllysine modification is found at lysine 150. Residues 185 to 194 show a composition bias toward basic and acidic residues; sequence VKRAEPRDSK. The segment at 185 to 407 is disordered; that stretch reads VKRAEPRDSK…NVQGFHPYRR (223 aa). The span at 195–207 shows a compositional bias: polar residues; that stretch reads SQAPGQPGASQWG. A compositionally biased stretch (pro residues) spans 247–262; sequence GPPPAGRGAPPPPPPF. Omega-N-methylarginine is present on arginine 253. Residues 280–294 show a composition bias toward low complexity; it reads FPQGYGAPPQFSFGY. The span at 295–315 shows a compositional bias: pro residues; sequence GPPPPPPDQFAPPGVPPPPAT. A compositionally biased stretch (low complexity) spans 364–379; it reads SDPSQQPPSYGGPSVP. Residues 380–393 are compositionally biased toward gly residues; the sequence is GSGGPPAGGSGFGR.

In terms of assembly, interacts with DAZ and DAZL. Acetylation at Lys-150 is predominantly observed in the nuclear fraction, and may regulate nucleocytoplasmic transport. Mainly expressed in testis. Expressed to a lower level in thymus. Weakly or not expressed in heart, liver, brain, placenta, lung, skeletal muscle, kidney and pancreas.

Its subcellular location is the cytoplasm. It is found in the nucleus. RNA-binding protein, which may be required during spermatogenesis. The protein is DAZ-associated protein 1 (DAZAP1) of Homo sapiens (Human).